We begin with the raw amino-acid sequence, 431 residues long: UDP-N-acetylglucosamine 1-carboxyvinyltransferase (431 aa).

A phosphoenolpyruvate-binding site is contributed by 22-23 (KN). R102 lines the UDP-N-acetyl-alpha-D-glucosamine pocket. C126 serves as the catalytic Proton donor. C126 carries the post-translational modification 2-(S-cysteinyl)pyruvic acid O-phosphothioketal. UDP-N-acetyl-alpha-D-glucosamine is bound by residues D318 and I340.

This sequence belongs to the EPSP synthase family. MurA subfamily.

Its subcellular location is the cytoplasm. The catalysed reaction is phosphoenolpyruvate + UDP-N-acetyl-alpha-D-glucosamine = UDP-N-acetyl-3-O-(1-carboxyvinyl)-alpha-D-glucosamine + phosphate. It functions in the pathway cell wall biogenesis; peptidoglycan biosynthesis. Functionally, cell wall formation. Adds enolpyruvyl to UDP-N-acetylglucosamine. The chain is UDP-N-acetylglucosamine 1-carboxyvinyltransferase from Bartonella tribocorum (strain CIP 105476 / IBS 506).